Here is a 98-residue protein sequence, read N- to C-terminus: Integration host factor subunit alpha (98 aa).

Belongs to the bacterial histone-like protein family. As to quaternary structure, heterodimer of an alpha and a beta chain.

Functionally, this protein is one of the two subunits of integration host factor, a specific DNA-binding protein that functions in genetic recombination as well as in transcriptional and translational control. In Marinomonas sp. (strain MWYL1), this protein is Integration host factor subunit alpha.